The sequence spans 803 residues: PR domain zinc finger protein 4 (803 aa).

An SET domain is found at 408–532 (KQLVLRQSIV…PESELLFYYS (125 aa)). C2H2-type zinc fingers lie at residues 593–615 (WKCS…FMGH), 621–643 (HKCD…LKIH), 649–671 (YRCT…MVIH), 677–699 (LKCD…VLIH), and 705–727 (IKCP…LNSH). The C2H2-type 6; degenerate zinc finger occupies 733-755 (YVCEKCTKAYLTKYHLTRHLKTC). The segment at 757–803 (EPSSSSSAQEEEDDESEEEDLADSMRTEDCRMGSAVYSTDESLSAHK) is disordered. The span at 765-778 (QEEEDDESEEEDLA) shows a compositional bias: acidic residues. The span at 792–803 (VYSTDESLSAHK) shows a compositional bias: polar residues.

This sequence belongs to the class V-like SAM-binding methyltransferase superfamily.

It is found in the nucleus. May function as a transcription factor involved in cell differentiation. The chain is PR domain zinc finger protein 4 (Prdm4) from Mus musculus (Mouse).